The following is a 976-amino-acid chain: MQPSQSLRRGGEQSWWGSAPQYQYMPFEHCTSYGLPSENGALQHRLHRDAGLRANTRPTQIYGHYKQQFSDKEQDTGMSKKMGSSESMDSKDEDHYSKCQGCVRRLGHVVRRKLGEDWIFLVLLGLLMALVSWSMDYVSAKSLQAYKWSYYQMQPNLPLQYLVWVTFPLTLILFSAVFCHLISPQAVGSGIPEMKTILRGVILKEYLTLKAFVAKVVALTAGLGSGIPVGKEGPFVHIASICAAVLSKFMSMFCGVYEQPYYYTDMLTVGCAVGVGCCFGTPLGGVLFSIEVTSTYFAVRNYWRGFFAATFSAFVFRVLAVWNKDAVTITALFRTNFRMDFPFDLQELPAFAIIGICCGFLGAVFVYLHRQVMLGVRKHKALSQFLAKHRLLYPGIVTFIIASFTFPPGIGQFMAGELMPREAISTLFDNNTWVKHVGDPESLGRSAVWIHPRVNVIIIIFLFFIMKFWMSIVATTMPIPCGGFMPVFVLGAAFGRLVGEIMAMLFPDGILFDDIIYKILPGGYAVIGAAALTGAVSHTVSTAVICFELTGQIAHILPMMVAVILANMVAQSLQPSLYDSIIQVKKLPYLPDLGWNQLSKFTIFVEDIMVRDVKFVSATCTYGELRTLLQTTTVKTLPLVDSKDSMILLGSVERSELQSLLQRHLGPERRLRVAQDMARKLSELPYDGKGHQGISPEGRRESFAFVDEDEDEDLSGKPELPPLPPPHPLPSAPLSSEESNGPLPSHKQQPEAPEPADQRPSVFRSLLRCLLGRPRPTKKKTTQESMDLVDNMSPEEIEAWEQEQLSQPVCFDYCCIDQSPFQLVEQTSLHKTHTLFSLLGLHLAYVTSMGKLRGVLALEELQKAIEGHTKSGVQLRPPLASFRSTTSTRKNPGGPPPPTEAWSLPEDGTGAPASPEPPAPSPSPAPLLSEAPAKVEGELEELELGESPGLEEELADILQGPSLRSTDEEDEDELIL.

Topologically, residues 1-118 are cytoplasmic; it reads MQPSQSLRRG…VVRRKLGEDW (118 aa). The disordered stretch occupies residues 71–92; that stretch reads DKEQDTGMSKKMGSSESMDSKD. Residues 77-87 are compositionally biased toward low complexity; sequence GMSKKMGSSES. Residues 119–150 form a helical membrane-spanning segment; sequence IFLVLLGLLMALVSWSMDYVSAKSLQAYKWSY. Topologically, residues 151–158 are extracellular; it reads YQMQPNLP. Residues 159-179 form a helical membrane-spanning segment; the sequence is LQYLVWVTFPLTLILFSAVFC. Residues 180–183 lie on the Cytoplasmic side of the membrane; it reads HLIS. The note=Loop between two helices intramembrane region spans 184–189; it reads PQAVGS. The Selectivity filter part_1 signature appears at 188 to 192; sequence GSGIP. Ser189 is a chloride binding site. Positions 190 to 195 form an intramembrane region, helical; the sequence is GIPEMK. The Cytoplasmic segment spans residues 196–208; the sequence is TILRGVILKEYLT. An intramembrane region (helical) is located at residues 209–224; the sequence is LKAFVAKVVALTAGLG. The note=Loop between two helices intramembrane region spans 225–230; sequence SGIPVG. The Selectivity filter part_2 motif lies at 230–234; the sequence is GKEGP. An intramembrane region (helical) is located at residues 231–246; sequence KEGPFVHIASICAAVL. The Cytoplasmic segment spans residues 247–268; that stretch reads SKFMSMFCGVYEQPYYYTDMLT. Intramembrane regions (helical) lie at residues 269-280 and 281-290; these read VGCAVGVGCCFG and TPLGGVLFSI. Residues 291–301 lie on the Cytoplasmic side of the membrane; that stretch reads EVTSTYFAVRN. The chain crosses the membrane as a helical span at residues 302–321; it reads YWRGFFAATFSAFVFRVLAV. The Extracellular portion of the chain corresponds to 322–347; it reads WNKDAVTITALFRTNFRMDFPFDLQE. The chain crosses the membrane as a helical span at residues 348–376; that stretch reads LPAFAIIGICCGFLGAVFVYLHRQVMLGV. At 377-390 the chain is on the cytoplasmic side; that stretch reads RKHKALSQFLAKHR. Residues 391–408 traverse the membrane as a helical segment; that stretch reads LLYPGIVTFIIASFTFPP. Residues 409-414 lie on the Extracellular side of the membrane; it reads GIGQFM. The note=Loop between two helices intramembrane region spans 415-418; it reads AGEL. An intramembrane region (helical) is located at residues 419–426; sequence MPREAIST. The Extracellular portion of the chain corresponds to 427–457; the sequence is LFDNNTWVKHVGDPESLGRSAVWIHPRVNVI. The helical intramembrane region spans 458–475; that stretch reads IIIFLFFIMKFWMSIVAT. The note=Loop between two helices intramembrane region spans 476-482; sequence TMPIPCG. Residues 482 to 486 carry the Selectivity filter part_3 motif; it reads GGFMP. The helical intramembrane region spans 483–498; it reads GFMPVFVLGAAFGRLV. Phe484 is a binding site for chloride. At 499 to 521 the chain is on the extracellular side; it reads GEIMAMLFPDGILFDDIIYKILP. Positions 522-538 form an intramembrane region, helical; it reads GGYAVIGAAALTGAVSH. An intramembrane region (note=Loop between two helices) is located at residues 539 to 540; the sequence is TV. Positions 541-554 form an intramembrane region, helical; it reads STAVICFELTGQIA. The Extracellular portion of the chain corresponds to 555-557; it reads HIL. The helical intramembrane region spans 558–571; sequence PMMVAVILANMVAQ. An intramembrane region (note=Loop between two helices) is located at residues 572–575; it reads SLQP. Residues 576 to 578 constitute an intramembrane region (helical); sequence SLY. Chloride is bound at residue Tyr578. The Cytoplasmic portion of the chain corresponds to 579–976; sequence DSIIQVKKLP…DEEDEDELIL (398 aa). The 60-residue stretch at 609–668 folds into the CBS 1 domain; that stretch reads MVRDVKFVSATCTYGELRTLLQTTTVKTLPLVDSKDSMILLGSVERSELQSLLQRHLGPE. Residues 707 to 759 are disordered; sequence DEDEDEDLSGKPELPPLPPPHPLPSAPLSSEESNGPLPSHKQQPEAPEPADQR. Positions 719–731 are enriched in pro residues; it reads ELPPLPPPHPLPS. The 56-residue stretch at 816-871 folds into the CBS 2 domain; it reads IDQSPFQLVEQTSLHKTHTLFSLLGLHLAYVTSMGKLRGVLALEELQKAIEGHTKS. The interval 872 to 976 is disordered; it reads GVQLRPPLAS…DEEDEDELIL (105 aa). Residue Ser881 is modified to Phosphoserine. Over residues 914–925 the composition is skewed to pro residues; that stretch reads SPEPPAPSPSPA. Composition is skewed to acidic residues over residues 938–955 and 967–976; these read ELEELELGESPGLEEELA and DEEDEDELIL.

It belongs to the chloride channel (TC 2.A.49) family. ClC-1/CLCN1 subfamily. Homodimer.

It localises to the cell membrane. Its subcellular location is the sarcolemma. It is found in the T-tubule. It catalyses the reaction chloride(in) = chloride(out). The catalysed reaction is thiocyanate(in) = thiocyanate(out). The enzyme catalyses bromide(in) = bromide(out). It carries out the reaction nitrate(in) = nitrate(out). It catalyses the reaction iodide(out) = iodide(in). Its activity is regulated as follows. Modulated by membrane voltage with depolarization favouring channel opening and hyperpolarization favouring channel closure. Inhibited by acidic pH and ATP binding due to a shift of voltage dependence of common gating to more positive voltages. Inhibited by 9-anthracene-carboxylic. In terms of biological role, voltage-gated chloride channel involved in skeletal muscle excitability. Generates most of the plasma membrane chloride conductance in skeletal muscle fibers, stabilizes the resting membrane potential and contributes to the repolarization phase during action potential firing. Forms a homodimeric channel where each subunit has its own ion conduction pathway. Conducts double-barreled currents controlled by two types of gates, two fast glutamate gates that control each subunit independently and a slow common gate that opens and shuts off both subunits simultaneously. Has a significant open probability at muscle resting potential and is further activated upon membrane depolarization. Permeable to small monovalent anions with ion selectivity for chloride &gt; thiocyanate &gt; bromide &gt; nitrate &gt; iodide. This chain is Chloride channel protein 1 (CLCN1), found in Canis lupus familiaris (Dog).